We begin with the raw amino-acid sequence, 175 residues long: Cytidylate kinase (175 aa).

7-15 (GLPGSGTTT) contacts ATP.

The protein belongs to the cytidylate kinase family. Type 2 subfamily.

The protein localises to the cytoplasm. The enzyme catalyses CMP + ATP = CDP + ADP. It carries out the reaction dCMP + ATP = dCDP + ADP. The protein is Cytidylate kinase of Methanococcoides burtonii (strain DSM 6242 / NBRC 107633 / OCM 468 / ACE-M).